We begin with the raw amino-acid sequence, 138 residues long: MTLNLRVMAPNRIVWNSEAQEIILSTNSGQIGILPNHAPLLTALDIGVMKVRINSDWCTMALMGGFAMIENNQLTILVNEAEKGSDINLEEAQQTFDLAQESLNQATGKKQTIEANLAFQRAKARLEAVKANSSSAYN.

This sequence belongs to the ATPase epsilon chain family. F-type ATPases have 2 components, CF(1) - the catalytic core - and CF(0) - the membrane proton channel. CF(1) has five subunits: alpha(3), beta(3), gamma(1), delta(1), epsilon(1). CF(0) has three main subunits: a, b and c.

Its subcellular location is the plastid. The protein localises to the chloroplast thylakoid membrane. Its function is as follows. Produces ATP from ADP in the presence of a proton gradient across the membrane. The polypeptide is ATP synthase epsilon chain, chloroplastic (Staurastrum punctulatum (Green alga)).